A 310-amino-acid chain; its full sequence is Tryptophan 2,3-dioxygenase (310 aa).

The segment at 1–39 (MQPPGNDAPAGCPFSGARAQGTQAAHEAPHVPGDAGEQA) is disordered. Substrate is bound by residues 79–83 (FIIQH), Tyr-141, and Arg-145. His-268 is a heme binding site. A substrate-binding site is contributed by Thr-282.

Belongs to the tryptophan 2,3-dioxygenase family. As to quaternary structure, homotetramer. Heme serves as cofactor.

The catalysed reaction is L-tryptophan + O2 = N-formyl-L-kynurenine. It functions in the pathway amino-acid degradation; L-tryptophan degradation via kynurenine pathway; L-kynurenine from L-tryptophan: step 1/2. In terms of biological role, heme-dependent dioxygenase that catalyzes the oxidative cleavage of the L-tryptophan (L-Trp) pyrrole ring and converts L-tryptophan to N-formyl-L-kynurenine. Catalyzes the oxidative cleavage of the indole moiety. This chain is Tryptophan 2,3-dioxygenase, found in Burkholderia multivorans (strain ATCC 17616 / 249).